A 489-amino-acid chain; its full sequence is Glycogen synthase (489 aa).

Arg20 is an ADP-alpha-D-glucose binding site.

Belongs to the glycosyltransferase 1 family. Bacterial/plant glycogen synthase subfamily.

It catalyses the reaction [(1-&gt;4)-alpha-D-glucosyl](n) + ADP-alpha-D-glucose = [(1-&gt;4)-alpha-D-glucosyl](n+1) + ADP + H(+). It participates in glycan biosynthesis; glycogen biosynthesis. Its function is as follows. Synthesizes alpha-1,4-glucan chains using ADP-glucose. The sequence is that of Glycogen synthase from Chlorobium luteolum (strain DSM 273 / BCRC 81028 / 2530) (Pelodictyon luteolum).